A 266-amino-acid chain; its full sequence is 5'-nucleotidase SurE (266 aa).

The a divalent metal cation site is built by D8, D9, S39, and N93.

Belongs to the SurE nucleotidase family. It depends on a divalent metal cation as a cofactor.

The protein resides in the cytoplasm. It carries out the reaction a ribonucleoside 5'-phosphate + H2O = a ribonucleoside + phosphate. In terms of biological role, nucleotidase that shows phosphatase activity on nucleoside 5'-monophosphates. The chain is 5'-nucleotidase SurE from Pyrobaculum arsenaticum (strain DSM 13514 / JCM 11321 / PZ6).